The following is a 298-amino-acid chain: Protein OS-9 homolog (298 aa).

The N-terminal stretch at 1–25 (MGLAGGARVVLFVVAAAAAAALTAA) is a signal peptide. N95 carries N-linked (GlcNAc...) asparagine glycosylation. The 126-residue stretch at 121–246 (DQCFYRHEGW…TVQSPMLCKN (126 aa)) folds into the MRH domain. C123 and C136 are disulfide-bonded. 3 residues coordinate a mannooligosaccharide derivative: W130, W131, and Q143. Residues N171 and N197 are each glycosylated (N-linked (GlcNAc...) asparagine). Disulfide bonds link C201–C232 and C216–C244. 4 residues coordinate a mannooligosaccharide derivative: D202, R208, E228, and Y234.

Belongs to the OS-9 family. As to quaternary structure, interacts with HRD3.

Its subcellular location is the endoplasmic reticulum. Functionally, lectin which functions in endoplasmic reticulum (ER) quality control and ER-associated degradation (ERAD). May bind terminally misfolded non-glycosylated proteins as well as improperly folded glycoproteins, retain them in the ER, and possibly transfer them to the ubiquitination machinery and promote their degradation. The polypeptide is Protein OS-9 homolog (Oryza sativa subsp. japonica (Rice)).